The chain runs to 127 residues: MLPSSTPGPGHATETCPAPPGPERSPAARAPAAASSLGPVSTAGRAPRGLDMSAQEPPQGRRFPIEAGDSRGLAAAPESQDSPEAVATEHNPVRPLRRCPGCHCLTLLHVPIDVYLAMGGSPRARAT.

The interval 1-96 (MLPSSTPGPG…ATEHNPVRPL (96 aa)) is disordered. Over residues 24–39 (RSPAARAPAAASSLGP) the composition is skewed to low complexity.

It belongs to the FAM229 family.

In Homo sapiens (Human), this protein is Protein FAM229A (FAM229A).